Reading from the N-terminus, the 437-residue chain is Transmembrane protease serine 4 (437 aa).

Topologically, residues 1–32 (MLQDPDSDQPLNSLDVKPLRKPRIPMETFRKV) are cytoplasmic. A helical; Signal-anchor for type II membrane protein membrane pass occupies residues 33–53 (GIPIIIALLSLASIIIVVVLI). At 54–437 (KVILDKYYFL…WIYNVWKAEL (384 aa)) the chain is on the extracellular side. The LDL-receptor class A domain occupies 61–93 (YFLCGQPLHFIPRKQLCDGELDCPLGEDEEHCV). Cystine bridges form between Cys64/Cys83, Cys77/Cys92, Cys127/Cys183, Cys140/Cys193, Cys196/Cys310, Cys230/Cys246, Cys356/Cys372, and Cys383/Cys410. The 111-residue stretch at 94 to 204 (KSFPEGPAVA…ACGKSLKTPR (111 aa)) folds into the SRCR domain. Asn130 and Asn178 each carry an N-linked (GlcNAc...) asparagine glycan. In terms of domain architecture, Peptidase S1 spans 205–434 (VVGVEEASVD…YLNWIYNVWK (230 aa)). Catalysis depends on charge relay system residues His245 and Asp290. Residue Ser387 is the Charge relay system of the active site.

This sequence belongs to the peptidase S1 family. Proteolytically processed; probably by an autocatalytic mechanism. As to expression, high levels in pancreatic, gastric, colorectal and ampullary cancer. Very weak expression in normal gastrointestinal and urogenital tract. Coexpressed with ACE2 within mature enterocytes.

The protein localises to the cell membrane. Its subcellular location is the secreted. Its function is as follows. Plasma membrane-anchored serine protease that directly induces processing of pro-uPA/PLAU into the active form through proteolytic activity. Seems to be capable of activating ENaC. In terms of biological role, (Microbial infection) In gut epithelial cells, facilitates human coronavirus SARS-CoV-2 infection through, at least, the cleavage of coronavirus spike glycoproteins which activates the glycoprotein for host cell entry. This is Transmembrane protease serine 4 from Homo sapiens (Human).